The chain runs to 47 residues: Short neurotoxin D2A (47 aa).

2 disulfides stabilise this stretch: cysteine 3–cysteine 24 and cysteine 17–cysteine 39.

Expressed by the venom gland.

It localises to the secreted. This chain is Short neurotoxin D2A, found in Micrurus pyrrhocryptus (Coral snake).